Consider the following 706-residue polypeptide: Fatty acid oxidation complex subunit alpha (706 aa).

Positions 1 to 188 (MEKTFSLSRR…KMGLVDDVVP (188 aa)) are enoyl-CoA hydratase. A 3-hydroxyacyl-CoA dehydrogenase region spans residues 308-706 (RKVAKAVVLG…AMAAEGKTFY (399 aa)).

This sequence in the N-terminal section; belongs to the enoyl-CoA hydratase/isomerase family. In the central section; belongs to the 3-hydroxyacyl-CoA dehydrogenase family. As to quaternary structure, heterotetramer of two alpha chains (FadJ) and two beta chains (FadI).

It localises to the cytoplasm. It catalyses the reaction a (3S)-3-hydroxyacyl-CoA = a (2E)-enoyl-CoA + H2O. The catalysed reaction is a 4-saturated-(3S)-3-hydroxyacyl-CoA = a (3E)-enoyl-CoA + H2O. The enzyme catalyses a (3S)-3-hydroxyacyl-CoA + NAD(+) = a 3-oxoacyl-CoA + NADH + H(+). It carries out the reaction (3S)-3-hydroxybutanoyl-CoA = (3R)-3-hydroxybutanoyl-CoA. Its pathway is lipid metabolism; fatty acid beta-oxidation. Catalyzes the formation of a hydroxyacyl-CoA by addition of water on enoyl-CoA. Also exhibits 3-hydroxyacyl-CoA epimerase and 3-hydroxyacyl-CoA dehydrogenase activities. This is Fatty acid oxidation complex subunit alpha from Shewanella amazonensis (strain ATCC BAA-1098 / SB2B).